We begin with the raw amino-acid sequence, 367 residues long: Peptide chain release factor 2 (367 aa).

Position 249 is an N5-methylglutamine (Gln249).

It belongs to the prokaryotic/mitochondrial release factor family. Post-translationally, methylated by PrmC. Methylation increases the termination efficiency of RF2.

The protein localises to the cytoplasm. In terms of biological role, peptide chain release factor 2 directs the termination of translation in response to the peptide chain termination codons UGA and UAA. The sequence is that of Peptide chain release factor 2 from Pseudothermotoga lettingae (strain ATCC BAA-301 / DSM 14385 / NBRC 107922 / TMO) (Thermotoga lettingae).